Here is a 142-residue protein sequence, read N- to C-terminus: Chorion class A protein Ld19 (142 aa).

The N-terminal stretch at 1-18 (MNSFALLLVCIQACLVQS) is a signal peptide.

Belongs to the chorion protein family.

Functionally, this protein is one of many from the eggshell of the gypsy moth. The chain is Chorion class A protein Ld19 from Lymantria dispar (Gypsy moth).